The sequence spans 262 residues: 4-hydroxy-2-oxo-heptane-1,7-dioate aldolase (262 aa).

H45 acts as the Proton acceptor in catalysis. Residue Q147 coordinates substrate. An a divalent metal cation-binding site is contributed by E149. Positions 174 and 175 each coordinate substrate. D175 is a binding site for a divalent metal cation.

Belongs to the HpcH/HpaI aldolase family. In terms of assembly, homohexamer; trimer of dimers. A divalent metal cation is required as a cofactor.

The catalysed reaction is 4-hydroxy-2-oxoheptanedioate = succinate semialdehyde + pyruvate. Its pathway is aromatic compound metabolism; 4-hydroxyphenylacetate degradation; pyruvate and succinate semialdehyde from 4-hydroxyphenylacetate: step 7/7. Catalyzes the reversible retro-aldol cleavage of 4-hydroxy-2-ketoheptane-1,7-dioate (HKHD) to pyruvate and succinic semialdehyde. The protein is 4-hydroxy-2-oxo-heptane-1,7-dioate aldolase of Shigella sonnei (strain Ss046).